The sequence spans 572 residues: Triacylglycerol lipase OBL1 (572 aa).

A helical membrane pass occupies residues Gly110–Leu130. The segment at Ile320–Lys356 is disordered. A compositionally biased stretch (low complexity) spans Ser323 to Asp334. Over residues Asp346–Lys356 the composition is skewed to basic and acidic residues. The GXSXG motif lies at Gly391–Gly395. Ser393 (nucleophile) is an active-site residue. Catalysis depends on charge relay system residues Asp457 and His550.

This sequence belongs to the AB hydrolase superfamily. Lipase family. Expressed in pollen grains and pollen tubes.

The protein resides in the lipid droplet. Its subcellular location is the membrane. It catalyses the reaction 1,2-di-(9Z-octadecenoyl)-glycerol + (9Z)-octadecenoate + H(+) = 1,2,3-tri-(9Z-octadecenoyl)-glycerol + H2O. It carries out the reaction 1-(9Z-octadecenoyl)-glycerol + H2O = glycerol + (9Z)-octadecenoate + H(+). Acid lipase that can hydrolyze a range of triacylglycerols without a clear preference for acyl-chains. Can also cleave 1,2-diacylglycerol, 1,3-diacylglycerol and 1-monoacylglycerol, but not phosphatidylcholine, phosphatidylethanolamine, or sterol esters. Required for pollen tube growth. Triacylglycerol hydrolysis by OBL1 may provide acyl groups for the synthesis of membrane lipids in growing pollen tubes. The polypeptide is Triacylglycerol lipase OBL1 (Nicotiana tabacum (Common tobacco)).